Reading from the N-terminus, the 535-residue chain is Flavin-containing monooxygenase 1 (535 aa).

Ala2 carries the N-acetylalanine modification. Residues 2–513 (AKRVAIVGAG…TRIVQESSSP (512 aa)) are Lumenal-facing. FAD is bound by residues 9–13 (GAGVS), Glu32, 40–41 (LW), and 61–62 (NS). Residues 60-61 (SN) and 195-198 (SGTD) contribute to the NADP(+) site. A helical membrane pass occupies residues 514–534 (FESLLKLFAVLALLVSVFLIF). A topological domain (cytoplasmic) is located at residue Leu535.

Belongs to the FMO family. Requires FAD as cofactor. In terms of tissue distribution, liver.

The protein resides in the endoplasmic reticulum membrane. It catalyses the reaction hypotaurine + NADPH + O2 + H(+) = taurine + NADP(+) + H2O. The enzyme catalyses hypotaurine + NADH + O2 + H(+) = taurine + NAD(+) + H2O. The catalysed reaction is trimethylamine + NADPH + O2 = trimethylamine N-oxide + NADP(+) + H2O. It carries out the reaction N,N-dimethylaniline + NADPH + O2 + H(+) = N,N-dimethylaniline N-oxide + NADP(+) + H2O. Functionally, broad spectrum monooxygenase that catalyzes the oxygenation of a wide variety of nitrogen- and sulfur-containing compounds including xenobiotics. Catalyzes the S-oxygenation of hypotaurine to produce taurine, an organic osmolyte involved in cell volume regulation as well as a variety of cytoprotective and developmental processes. In vitro, catalyzes the N-oxygenation of trimethylamine (TMA) to produce trimethylamine N-oxide (TMAO) and could therefore participate to the detoxification of this compound that is generated by the action of gut microbiota from dietary precursors such as choline, choline containing compounds, betaine or L-carnitine. This chain is Flavin-containing monooxygenase 1 (FMO1), found in Oryctolagus cuniculus (Rabbit).